The primary structure comprises 867 residues: Protein argonaute-3 (867 aa).

Residues methionine 1 to threonine 83 are necessary and sufficient for interaction with krimp. An interaction with papi region spans residues methionine 1 to glutamine 289. 3 positions are modified to symmetric dimethylarginine: arginine 4, arginine 68, and arginine 70. Residues threonine 291–glycine 402 enclose the PAZ domain. The Piwi domain occupies methionine 566–glutamine 853.

This sequence belongs to the argonaute family. Piwi subfamily. Component of the ping-pong piRNA processing (4P) complex consisting of krimp, aub and AGO3. Interacts (via N-terminus when not methylated on arginine residues) with krimp (via non-canonical tudor domain); this interaction leads to symmetrical dimethylation on AGO3 arginine residues and its subsequent dissociation from krimp. Krimp associated AGO3 is mostly free of piRNA binding and the interaction plays an important role in the loading of AGO3 with piRNAs; piRNA binding may stimulate dissociation of the two proteins. May form part of a piRNA processing complex consisting of tud, aub and AGO3. Interacts (when symmetrically dimethylated on arginine residues) with tud. Forms a complex with smg, twin, aub, nos mRNA and piRNAs that target the nos 3'-untranslated region, in early embryos. Interacts (via the N-terminal region when symmetrically methylated on arginine residues) with papi (via C-terminus); this interaction is RNA-independent and may be required for AGO3 localization to the nuage. Interacts with TER94 and tral. Symmetrically dimethylated on Arg-4, Arg-68 and Arg-70, most likely by csul/PRMT5/DART5. Methylation state probably functions as an indicator of its piRNA binding state. In terms of tissue distribution, in ovary, expressed in germline stem cells, germline cyst cells, nurse cells and oocytes during early stages. Also found in the somatic cap cells of the germarium. In testis, expressed in germline stem cells, primary gonial cells and early spermatocytes. No expression detected in the somatic hub cells at the apical tip of the testis (at protein level). Expressed in neurons throughout the adult brain and in the mushroom body subdivision in the peduncle. In the mushroom body, expressed only in gamma and core alpha-beta neurons.

It localises to the cytoplasm. The protein localises to the perinuclear region. Its subcellular location is the cytoplasmic ribonucleoprotein granule. Functionally, component of the perinuclear meiotic nuage, a germline-specific subcellular membraneless ribonucleoprotein compartment involved in production of transposable element-repressing Piwi-interacting RNA (piRNA)-induced silencing complexes (piRISCs), which are essential for maintaining germline integrity during oogenesis. Acts via the Piwi-interacting RNA (piRNA) metabolic process, which mediates the repression of transposable elements during meiosis by forming complexes composed of piRNAs and Piwi proteins and governs the methylation and subsequent repression of transposons. Piwi protein that directly binds piRNAs, a class of 24 to 30 nucleotide RNAs that are generated by a Dicer-independent mechanism and are primarily derived from transposons and other repeated sequence elements. Associates predominantly with sense piRNAs that contain adenine at nucleotide 10, but shows no preference for uridine at the 5' end. Shows RNA cleavage or slicer activity. Together with Piwi protein aub recruited to subregions of the perinuclear nuage by krimp, which coordinates their activity in the ping-pong amplification step of secondary piRNA biogenesis. Krimp recruits piRNA bound aub and unbound AGO3, bringing them into close proximity to facilitate the loading onto AGO3 of freshly cut piRNAs generated by aub cleavage of target sequences; krimp recognizes the piRNA loading state of the Piwi proteins via symmetrically dimethylated arginine modification in their N-terminus. Important for asymmetric ping-pong amplification to bias production towards antisense piRNAs capable of silencing transposable elements. In testis, associates with Su(Ste) and AT-chX-1 piRNAs mostly produced from antisense precursors. In the germline, acts to amplify pools of antisense piRNAs, among others Su(Ste), AT-chX-1 and roo, and to limit sense piRNA accumulation. Forms a complex with smg, twin, aub and specific piRNAs that targets nos mRNA (and probably other maternal mRNAS) for deadenylation promoting its decay during early embryogenesis. Involved in transposon silencing in the adult brain. The protein is Protein argonaute-3 of Drosophila melanogaster (Fruit fly).